A 1093-amino-acid chain; its full sequence is TATA element modulatory factor (1093 aa).

2 disordered regions span residues 38–80 (WAET…SPKA) and 108–189 (TIQK…DMKV). Residues 51–70 (SPVSGGWDTSTWGLKSNTEP) show a composition bias toward polar residues. Residues Ser-72, Ser-77, Ser-112, and Ser-136 each carry the phosphoserine modification. A compositionally biased stretch (basic and acidic residues) spans 123-137 (QRPEEEVKSSLHESL). A compositionally biased stretch (polar residues) spans 139–158 (IGQSRTPETTESQVKDSSLC). The span at 173-187 (TEGKHEETVNKESDM) shows a compositional bias: basic and acidic residues. 2 positions are modified to phosphoserine: Ser-199 and Ser-217. Residues 229–238 (PKEQKHEDRQ) are compositionally biased toward basic and acidic residues. Disordered regions lie at residues 229–260 (PKEQ…SDIE) and 266–285 (SVIS…SKSS). Residues 246–257 (VSTFSSGTSTTS) are compositionally biased toward low complexity. Residues Ser-328, Ser-330, Ser-333, Ser-338, Ser-344, Ser-413, Ser-542, Ser-925, and Ser-928 each carry the phosphoserine modification. An interaction with Elongin BC complex region spans residues 333-342 (SLDSRSVSEI). Positions 439–922 (EALSEKEDVC…QETIKEKERK (484 aa)) form a coiled coil. Positions 919-939 (KERKPFSVSSTPTMSRSSSIS) are disordered. The span at 925–939 (SVSSTPTMSRSSSIS) shows a compositional bias: low complexity. Thr-929 is subject to Phosphothreonine. Ser-933 bears the Phosphoserine mark. The stretch at 984 to 1092 (SIIENLQSQL…QIDELLRQSL (109 aa)) forms a coiled coil.

As to quaternary structure, interacts with TRNP1; may regulate TRNP1 proteasomal degradation. Component of the SNF/SWI transcription factor complexes. Interacts with RAB6A. Interacts with STAT3 and FER. Interacts with TCEB1. In terms of processing, phosphorylated by FER.

The protein resides in the cytoplasm. It localises to the nucleus. Its subcellular location is the golgi apparatus membrane. Its function is as follows. Potential coactivator of the androgen receptor. Mediates STAT3 degradation. May play critical roles in two RAB6-dependent retrograde transport processes: one from endosomes to the Golgi and the other from the Golgi to the ER. This protein binds the HIV-1 TATA element and inhibits transcriptional activation by the TATA-binding protein (TBP). The polypeptide is TATA element modulatory factor (TMF1) (Homo sapiens (Human)).